The following is a 431-amino-acid chain: Serine hydroxymethyltransferase 2 (431 aa).

(6S)-5,6,7,8-tetrahydrofolate is bound by residues L131 and 135–137; that span reads GHL. Residue K240 is modified to N6-(pyridoxal phosphate)lysine. E256 is a binding site for (6S)-5,6,7,8-tetrahydrofolate.

The protein belongs to the SHMT family. In terms of assembly, homodimer. Pyridoxal 5'-phosphate serves as cofactor.

It is found in the cytoplasm. The catalysed reaction is (6R)-5,10-methylene-5,6,7,8-tetrahydrofolate + glycine + H2O = (6S)-5,6,7,8-tetrahydrofolate + L-serine. It functions in the pathway one-carbon metabolism; tetrahydrofolate interconversion. It participates in amino-acid biosynthesis; glycine biosynthesis; glycine from L-serine: step 1/1. Functionally, catalyzes the reversible interconversion of serine and glycine with tetrahydrofolate (THF) serving as the one-carbon carrier. This reaction serves as the major source of one-carbon groups required for the biosynthesis of purines, thymidylate, methionine, and other important biomolecules. Also exhibits THF-independent aldolase activity toward beta-hydroxyamino acids, producing glycine and aldehydes, via a retro-aldol mechanism. This chain is Serine hydroxymethyltransferase 2, found in Vibrio vulnificus (strain CMCP6).